Consider the following 382-residue polypeptide: Dual-specificity RNA methyltransferase RlmN (382 aa).

Glutamate 95 functions as the Proton acceptor in the catalytic mechanism. Positions 101–349 constitute a Radical SAM core domain; sequence EETRGTLCVS…TTVRKTRGDD (249 aa). An intrachain disulfide couples cysteine 108 to cysteine 354. Cysteine 115, cysteine 119, and cysteine 122 together coordinate [4Fe-4S] cluster. Residues 180-181, serine 212, 234-236, and asparagine 311 contribute to the S-adenosyl-L-methionine site; these read GE and SLH. Catalysis depends on cysteine 354, which acts as the S-methylcysteine intermediate.

The protein belongs to the radical SAM superfamily. RlmN family. It depends on [4Fe-4S] cluster as a cofactor.

The protein localises to the cytoplasm. It carries out the reaction adenosine(2503) in 23S rRNA + 2 reduced [2Fe-2S]-[ferredoxin] + 2 S-adenosyl-L-methionine = 2-methyladenosine(2503) in 23S rRNA + 5'-deoxyadenosine + L-methionine + 2 oxidized [2Fe-2S]-[ferredoxin] + S-adenosyl-L-homocysteine. The catalysed reaction is adenosine(37) in tRNA + 2 reduced [2Fe-2S]-[ferredoxin] + 2 S-adenosyl-L-methionine = 2-methyladenosine(37) in tRNA + 5'-deoxyadenosine + L-methionine + 2 oxidized [2Fe-2S]-[ferredoxin] + S-adenosyl-L-homocysteine. Functionally, specifically methylates position 2 of adenine 2503 in 23S rRNA and position 2 of adenine 37 in tRNAs. m2A2503 modification seems to play a crucial role in the proofreading step occurring at the peptidyl transferase center and thus would serve to optimize ribosomal fidelity. The chain is Dual-specificity RNA methyltransferase RlmN from Paraburkholderia phymatum (strain DSM 17167 / CIP 108236 / LMG 21445 / STM815) (Burkholderia phymatum).